Consider the following 52-residue polypeptide: Thiocillin (52 aa).

Residues 1–38 (MSEIKKALNTLEIEDFDAIEMVDVDAMPENEALEIMGA) constitute a propeptide that is removed on maturation. The segment at residues 39–40 (SC) is a cross-link (thiazole-4-carboxylic acid (Ser-Cys)). The segment at residues 39 to 47 (SCTTCVCTC) is a cross-link (pyridine-2,5-dicarboxylic acid (Ser-Cys) (with S-48)). The pyridine-2,5-dicarboxylic acid (Ser-Ser) (with C-47) cross-link spans 39–48 (SCTTCVCTCS). A (Z)-2,3-didehydrobutyrine modification is found at Thr-42. Residues 42–43 (TC) constitute a cross-link (thiazole-4-carboxylic acid (Thr-Cys)). A 3-hydroxyvaline (Val); partial modification is found at Val-44. The segment at residues 44-45 (VC) is a cross-link (thiazole-4-carboxylic acid (Val-Cys)). Thr-46 carries the O-methylthreonine; partial modification. Residues 46–47 (TC) constitute a cross-link (thiazole-4-carboxylic acid (Thr-Cys)). Residues 48 to 49 (SC) constitute a cross-link (thiazole-4-carboxylic acid (Ser-Cys)). The segment at residues 49-50 (CC) is a cross-link (thiazole-4-carboxylic acid (Cys-Cys)). At Thr-51 the chain carries (Z)-2,3-didehydrobutyrine. Thr-52 is subject to 1-amino-2-propanone; alternate. Position 52 is a decarboxylated threonine; alternate (Thr-52).

Belongs to the thiocillin family. Maturation of thiazole and oxazole containing antibiotics involves the enzymatic condensation of a Cys, Ser or Thr with the alpha-carbonyl of the preceding amino acid to form a thioether or ether bond, then dehydration to form a double bond with the alpha-amino nitrogen. Thiazoline or oxazoline ring are dehydrogenated to form thiazole or oxazole rings. In terms of processing, maturation of pyridinyl containing antibiotics involves the cross-linking of a Ser and a Cys-Ser pair usually separated by 7 or 8 residues along the peptide chain. The Ser residues are dehydrated to didehydroalanines, then bonded between their beta carbons. The alpha carbonyl of the Cys condenses with alpha carbon of the first Ser to form a pyridinyl ring. The ring may be multiply dehydrogenated to form a pyridine ring with loss of the amino nitrogen of the first Ser. Post-translationally, the 8 possible modification isomers, differing in the presence of modifications at three positions, have been characterized in PubMed:19196969. Val-44 is modified to 3-hydroxyvaline in forms thiocillin I, thiocillin II, YM-266183, and YM-266184. Thr-46 is modified to O-methylthreonine in forms thiocillin II, thiocillin III, thiocillin IV, and YM-266184. Thr-52 is decarboxylated to (R)-1-aminopropan-2-ol in forms micrococcin P1, thiocillin I, thiocillin II, and thiocillin III. Thr-52 is decarboxylated and oxidized to 1-amino-2-propanone in forms micrococcin P2, YM-266183, YM-266184. and thiocillin IV. The structure of 2,3-didehydrobutyrines is not discussed in PubMed:19196969. However, in Fig. 3 the residues are diagrammed as Z-isomers.

It localises to the secreted. In terms of biological role, has bacteriocidal activity against Gram-positive bacteria, but not against Gram-negative bacteria. Inhibits bacterial protein biosynthesis by acting on the elongation factor Tu (EF-Tu). This chain is Thiocillin, found in Bacillus cereus (strain ATCC 14579 / DSM 31 / CCUG 7414 / JCM 2152 / NBRC 15305 / NCIMB 9373 / NCTC 2599 / NRRL B-3711).